Here is a 563-residue protein sequence, read N- to C-terminus: GTPase Obg (563 aa).

In terms of domain architecture, Obg spans 2-168 (SDFVDRVTVH…RDVILELKSI (167 aa)). The OBG-type G domain occupies 169 to 349 (ADVALVGFPS…LNFALSALVH (181 aa)). Residues 175–182 (GFPSAGKS), 200–204 (FTTLV), 221–224 (DVPG), 301–304 (NKID), and 330–332 (STA) each bind GTP. Positions 182 and 202 each coordinate Mg(2+). One can recognise an OCT domain in the interval 383–469 (DEGGSALEFT…ARMVEFDWDP (87 aa)). 2 disordered regions span residues 478–509 (LDGSNLGARGKDLRLEEQDPRTHRRSNAERRA) and 528–563 (ERKAGHWADPTVDDDRHDENSLFGHGESSEDGETEE). Basic and acidic residues predominate over residues 486–509 (RGKDLRLEEQDPRTHRRSNAERRA).

Belongs to the TRAFAC class OBG-HflX-like GTPase superfamily. OBG GTPase family. In terms of assembly, monomer. Mg(2+) is required as a cofactor.

It localises to the cytoplasm. Its function is as follows. An essential GTPase which binds GTP, GDP and possibly (p)ppGpp with moderate affinity, with high nucleotide exchange rates and a fairly low GTP hydrolysis rate. Plays a role in control of the cell cycle, stress response, ribosome biogenesis and in those bacteria that undergo differentiation, in morphogenesis control. The sequence is that of GTPase Obg from Bifidobacterium longum subsp. infantis (strain ATCC 15697 / DSM 20088 / JCM 1222 / NCTC 11817 / S12).